The chain runs to 358 residues: Serine/threonine-protein phosphatase 2A activator 2 (358 aa).

The protein belongs to the PTPA-type PPIase family.

The protein localises to the cytoplasm. It catalyses the reaction [protein]-peptidylproline (omega=180) = [protein]-peptidylproline (omega=0). Its function is as follows. PPIases accelerate the folding of proteins. It catalyzes the cis-trans isomerization of proline imidic peptide bonds in oligopeptides. Acts as a regulatory subunit for PP2A-like phosphatases modulating their activity or substrate specificity, probably by inducing a conformational change in the catalytic subunit, a direct target of the PPIase. Can reactivate inactive phosphatase PP2A-phosphatase methylesterase complexes (PP2Ai) in presence of ATP and Mg(2+) by dissociating the inactive form from the complex. The protein is Serine/threonine-protein phosphatase 2A activator 2 (RRD2) of Candida albicans (strain SC5314 / ATCC MYA-2876) (Yeast).